The following is a 141-amino-acid chain: Large-conductance mechanosensitive channel (141 aa).

Helical transmembrane passes span 16-36 (VIDL…VDSV), 40-60 (LIMP…MFIV), and 86-106 (GNFL…FLMV).

Belongs to the MscL family. Homopentamer.

It is found in the cell inner membrane. Its function is as follows. Channel that opens in response to stretch forces in the membrane lipid bilayer. May participate in the regulation of osmotic pressure changes within the cell. The polypeptide is Large-conductance mechanosensitive channel (Cupriavidus necator (strain ATCC 17699 / DSM 428 / KCTC 22496 / NCIMB 10442 / H16 / Stanier 337) (Ralstonia eutropha)).